The primary structure comprises 288 residues: Nucleotide-binding protein Veis_1053 (288 aa).

An ATP-binding site is contributed by 10–17 (GMSGSGKS). Position 59-62 (59-62 (DVRS)) interacts with GTP.

Belongs to the RapZ-like family.

Its function is as follows. Displays ATPase and GTPase activities. The protein is Nucleotide-binding protein Veis_1053 of Verminephrobacter eiseniae (strain EF01-2).